We begin with the raw amino-acid sequence, 218 residues long: 3-oxo-tetronate 4-phosphate decarboxylase (218 aa).

The Proton acceptor role is filled by E86. Residues E86, H105, and H107 each contribute to the Zn(2+) site. Catalysis depends on Y132, which acts as the Proton donor. Residue H172 participates in Zn(2+) binding.

It belongs to the aldolase class II family. AraD/FucA subfamily. It depends on Zn(2+) as a cofactor.

The enzyme catalyses 3-dehydro-4-O-phospho-D-erythronate + H(+) = dihydroxyacetone phosphate + CO2. It carries out the reaction 3-dehydro-4-O-phospho-L-erythronate + H(+) = dihydroxyacetone phosphate + CO2. In terms of biological role, catalyzes the decarboxylation of 3-oxo-tetronate 4-phosphate to dihydroxyacetone phosphate (DHAP) and CO(2). This Pectobacterium atrosepticum (strain SCRI 1043 / ATCC BAA-672) (Erwinia carotovora subsp. atroseptica) protein is 3-oxo-tetronate 4-phosphate decarboxylase.